Reading from the N-terminus, the 61-residue chain is Probable tautomerase SERP0934 (61 aa).

The active-site Proton acceptor; via imino nitrogen is proline 2.

This sequence belongs to the 4-oxalocrotonate tautomerase family.

The chain is Probable tautomerase SERP0934 from Staphylococcus epidermidis (strain ATCC 35984 / DSM 28319 / BCRC 17069 / CCUG 31568 / BM 3577 / RP62A).